An 89-amino-acid polypeptide reads, in one-letter code: Probable Fe(2+)-trafficking protein (89 aa).

Belongs to the Fe(2+)-trafficking protein family.

Its function is as follows. Could be a mediator in iron transactions between iron acquisition and iron-requiring processes, such as synthesis and/or repair of Fe-S clusters in biosynthetic enzymes. The sequence is that of Probable Fe(2+)-trafficking protein from Legionella pneumophila (strain Paris).